The primary structure comprises 124 residues: Small ribosomal subunit protein uS13 (124 aa).

The tract at residues 99–124 (RGQRTRTNARTRKGPRKTVGVMRKKS) is disordered. The span at 101-124 (QRTRTNARTRKGPRKTVGVMRKKS) shows a compositional bias: basic residues.

The protein belongs to the universal ribosomal protein uS13 family. Part of the 30S ribosomal subunit. Forms a loose heterodimer with protein S19. Forms two bridges to the 50S subunit in the 70S ribosome.

Its function is as follows. Located at the top of the head of the 30S subunit, it contacts several helices of the 16S rRNA. In the 70S ribosome it contacts the 23S rRNA (bridge B1a) and protein L5 of the 50S subunit (bridge B1b), connecting the 2 subunits; these bridges are implicated in subunit movement. Contacts the tRNAs in the A and P-sites. The polypeptide is Small ribosomal subunit protein uS13 (Caldicellulosiruptor bescii (strain ATCC BAA-1888 / DSM 6725 / KCTC 15123 / Z-1320) (Anaerocellum thermophilum)).